We begin with the raw amino-acid sequence, 331 residues long: Adenosine deaminase (331 aa).

Residues histidine 12 and histidine 14 each coordinate Zn(2+). Positions 14, 16, and 170 each coordinate substrate. Histidine 197 is a Zn(2+) binding site. Glutamate 200 serves as the catalytic Proton donor. A Zn(2+)-binding site is contributed by aspartate 278. Residue aspartate 279 participates in substrate binding.

Belongs to the metallo-dependent hydrolases superfamily. Adenosine and AMP deaminases family. Adenosine deaminase subfamily. It depends on Zn(2+) as a cofactor.

It carries out the reaction adenosine + H2O + H(+) = inosine + NH4(+). The catalysed reaction is 2'-deoxyadenosine + H2O + H(+) = 2'-deoxyinosine + NH4(+). Its function is as follows. Catalyzes the hydrolytic deamination of adenosine and 2-deoxyadenosine. The protein is Adenosine deaminase of Shewanella sp. (strain W3-18-1).